We begin with the raw amino-acid sequence, 140 residues long: Large ribosomal subunit protein bL17 (140 aa).

Residues 119–133 (DPSAKGAADRARLEE) show a composition bias toward basic and acidic residues. Residues 119-140 (DPSAKGAADRARLEEEGGMTEE) form a disordered region.

Belongs to the bacterial ribosomal protein bL17 family. In terms of assembly, part of the 50S ribosomal subunit. Contacts protein L32.

The protein is Large ribosomal subunit protein bL17 of Maricaulis maris (strain MCS10) (Caulobacter maris).